A 681-amino-acid polypeptide reads, in one-letter code: Type VI secretion system spike protein VgrG1 (681 aa).

Positions 621-640 are disordered; sequence NSGGSPSSGSGWGGKSPVDP.

This sequence belongs to the VgrG protein family.

It is found in the secreted. It catalyses the reaction L-arginyl-[protein] + NAD(+) = N(omega)-(ADP-D-ribosyl)-L-arginyl-[protein] + nicotinamide + H(+). Part of the type VI secretion system specialized secretion system, which delivers several virulence factors in both prokaryotic and eukaryotic cells during infection. Acts directly as an secreted effector with an actin ADP-ribosyltransferase activity that disrupts the host actin cytoskeleton, leading to a decrease in host cell viability and an increase in apoptosis. This Aeromonas hydrophila protein is Type VI secretion system spike protein VgrG1 (vgrG1).